Here is a 133-residue protein sequence, read N- to C-terminus: MIIGIGSDLCDIRRIEKSLERFGDRFTHKVFTETERTRSERKPDRASSYAKRFAAKEACSKALGTGLKRGVHLAGMGVVNLPSGQPTMALTGGALERLKAMVPEGMEPVIHLSLTDDHPYAQAFVIIEALPKR.

Mg(2+) is bound by residues aspartate 8 and glutamate 57.

The protein belongs to the P-Pant transferase superfamily. AcpS family. Mg(2+) serves as cofactor.

It localises to the cytoplasm. It carries out the reaction apo-[ACP] + CoA = holo-[ACP] + adenosine 3',5'-bisphosphate + H(+). Its function is as follows. Transfers the 4'-phosphopantetheine moiety from coenzyme A to a Ser of acyl-carrier-protein. The protein is Holo-[acyl-carrier-protein] synthase of Caulobacter vibrioides (strain ATCC 19089 / CIP 103742 / CB 15) (Caulobacter crescentus).